We begin with the raw amino-acid sequence, 698 residues long: Cytoplasmic polyadenylation element-binding protein 3 (698 aa).

The span at 1-11 (MQDDLLMDKSK) shows a compositional bias: basic and acidic residues. 2 disordered regions span residues 1–114 (MQDD…WSTG) and 158–208 (AQTQ…SAAA). The segment covering 13–28 (QPQPQQQQRQQQQPQP) has biased composition (low complexity). Residues 29-44 (ESSVSEAPSTPLSSET) are compositionally biased toward polar residues. Residues 87–96 (PQQPPPPQEP) show a composition bias toward pro residues. Residues 103-114 (LSPSFGSTWSTG) are compositionally biased toward polar residues. The segment covering 165-185 (QPPPPAPAPQPAQPAQPPQAQ) has biased composition (pro residues). Residues 186–208 (PPQQRRSPASPSQAPYAQRSAAA) show a composition bias toward low complexity. Ser192, Ser195, and Ser290 each carry phosphoserine. At Arg308 the chain carries Asymmetric dimethylarginine. 2 consecutive RRM domains span residues 441–532 (RKVF…PWNL) and 549–631 (KTIF…PYVL).

It belongs to the RRM CPEB family. As to quaternary structure, following synaptic activity, forms amyloid-like oligomers. Aggregation requires an intact actin cytoskeleton. Interacts with STAT5B; this inhibits STAT5B-mediated transcriptional activation. Interacts with E3 ubiquitin-protein ligase NEURL1; this leads to monoubiquitination and activation of CPEB3. Interacts with CAPN2; this leads to cleavage of CPEB3. Interacts (via C-terminal RNA-binding region) with TOB1; TOB1 also binds CNOT7/CAF1 and recruits it to CPEB3 to form a ternary complex. Interacts with SUMO-conjugating enzyme UBC9. Interacts with IPO5; the interaction is enhanced in a RAN-regulated manner following neuronal stimulation and mediates CPEB3 nuclear import. Interacts with exportin XPO1/CRM1. Post-translationally, activated by NEURL1-mediated monoubiquitination, resulting in the growth of new dendritic spines and increased levels of GRIA1 and GRIA2. NEURL1-mediated monoubiquitination facilitates synaptic plasticity and hippocampal-dependent memory storage. Under basal unstimulated conditions when CPEB3 is mainly unaggregated, sumoylated and acts as a translational repressor. Following neuronal stimulation, becomes desumoylated and aggregated which is required for the translation of mRNA targets and for dendritic filopodia formation. In terms of processing, following neuronal stimulation, cleaved by CAPN2 which abolishes its translational repressor activity, leading to translation of CPEB3 target mRNAs. Post-translationally, phosphorylation is enhanced by neuronal stimulation.

It localises to the cytoplasm. The protein localises to the nucleus. It is found in the synapse. The protein resides in the cell projection. Its subcellular location is the dendrite. It localises to the postsynaptic density. Sequence-specific RNA-binding protein which acts as a translational repressor in the basal unstimulated state but, following neuronal stimulation, acts as a translational activator. In contrast to CPEB1, does not bind to the cytoplasmic polyadenylation element (CPE), a uridine-rich sequence element within the mRNA 3'-UTR, but binds to a U-rich loop within a stem-loop structure. Required for the consolidation and maintenance of hippocampal-based long term memory. In the basal state, binds to the mRNA 3'-UTR of the glutamate receptors GRIA2/GLUR2 mRNA and negatively regulates their translation. Also represses the translation of DLG4, GRIN1, GRIN2A and GRIN2B. When activated, acts as a translational activator of GRIA1 and GRIA2. In the basal state, suppresses SUMO2 translation but activates it following neuronal stimulation. Binds to the 3'-UTR of TRPV1 mRNA and represses TRPV1 translation which is required to maintain normal thermoception. Binds actin mRNA, leading to actin translational repression in the basal state and to translational activation following neuronal stimulation. Negatively regulates target mRNA levels by binding to TOB1 which recruits CNOT7/CAF1 to a ternary complex and this leads to target mRNA deadenylation and decay. In addition to its role in translation, binds to and inhibits the transcriptional activation activity of STAT5B without affecting its dimerization or DNA-binding activity. This, in turn, represses transcription of the STAT5B target gene EGFR which has been shown to play a role in enhancing learning and memory performance. In contrast to CPEB1, CPEB2 and CPEB4, not required for cell cycle progression. This is Cytoplasmic polyadenylation element-binding protein 3 (CPEB3) from Homo sapiens (Human).